The chain runs to 543 residues: Fiber protein (543 aa).

Residues 1–36 are disordered; that stretch reads MKRTRSALPANFDPVYPYDAPKPSTQPPFFNDRKGL.

This sequence belongs to the adenoviridae fiber family. Homotrimer. Interacts (via N-terminal tail region) with pentons.

Its subcellular location is the virion. The protein resides in the host nucleus. In terms of biological role, forms spikes that protrude from each vertex of the icosahedral capsid. Interacts with host receptor to provide virion initial attachment to target cell. Fiber proteins are shed during virus entry, when virus is still at the cell surface. The chain is Fiber protein from Canine adenovirus serotype 1 (strain RI261) (CAdV-1).